Here is a 435-residue protein sequence, read N- to C-terminus: Histidine--tRNA ligase (435 aa).

Belongs to the class-II aminoacyl-tRNA synthetase family.

Its subcellular location is the cytoplasm. It carries out the reaction tRNA(His) + L-histidine + ATP = L-histidyl-tRNA(His) + AMP + diphosphate + H(+). The polypeptide is Histidine--tRNA ligase (hisS) (Aeropyrum pernix (strain ATCC 700893 / DSM 11879 / JCM 9820 / NBRC 100138 / K1)).